A 122-amino-acid chain; its full sequence is Large ribosomal subunit protein uL14c (122 aa).

Belongs to the universal ribosomal protein uL14 family. Part of the 50S ribosomal subunit.

Its subcellular location is the plastid. The protein localises to the chloroplast. Its function is as follows. Binds to 23S rRNA. The sequence is that of Large ribosomal subunit protein uL14c from Gossypium barbadense (Sea Island cotton).